Here is a 144-residue protein sequence, read N- to C-terminus: Deoxyuridine 5'-triphosphate nucleotidohydrolase (144 aa).

Substrate contacts are provided by residues 63–65 (RSG), Asn76, and 80–82 (TID).

Belongs to the dUTPase family. Mg(2+) is required as a cofactor.

It catalyses the reaction dUTP + H2O = dUMP + diphosphate + H(+). Its pathway is pyrimidine metabolism; dUMP biosynthesis; dUMP from dCTP (dUTP route): step 2/2. Functionally, this enzyme is involved in nucleotide metabolism: it produces dUMP, the immediate precursor of thymidine nucleotides and it decreases the intracellular concentration of dUTP so that uracil cannot be incorporated into DNA. The polypeptide is Deoxyuridine 5'-triphosphate nucleotidohydrolase (Phocaeicola vulgatus (strain ATCC 8482 / DSM 1447 / JCM 5826 / CCUG 4940 / NBRC 14291 / NCTC 11154) (Bacteroides vulgatus)).